Reading from the N-terminus, the 202-residue chain is Large ribosomal subunit protein uL4 (202 aa).

A disordered region spans residues 47-67 (KTKAEVSGGGVKPWKQKGTGR).

Belongs to the universal ribosomal protein uL4 family. Part of the 50S ribosomal subunit.

One of the primary rRNA binding proteins, this protein initially binds near the 5'-end of the 23S rRNA. It is important during the early stages of 50S assembly. It makes multiple contacts with different domains of the 23S rRNA in the assembled 50S subunit and ribosome. In terms of biological role, forms part of the polypeptide exit tunnel. The polypeptide is Large ribosomal subunit protein uL4 (Dichelobacter nodosus (strain VCS1703A)).